The following is a 370-amino-acid chain: ADP-ribosylation factor-like protein 13B (370 aa).

4 S-palmitoyl cysteine lipidation sites follow: cysteine 12, cysteine 13, cysteine 14, and cysteine 15. GTP-binding positions include 31-38 (GIGSAGKT), 75-79 (DVGGD), and 134-137 (NNQN). Lysine 239 is covalently cross-linked (Glycyl lysine isopeptide (Lys-Gly) (interchain with G-Cter in SUMO)). Positions 255–331 (RNQPPVQPPI…PVSPESNSVK (77 aa)) are disordered. The span at 259–271 (PVQPPIPPDPPSD) shows a compositional bias: pro residues. 2 stretches are compositionally biased toward polar residues: residues 287 to 303 (LASS…TPET) and 314 to 328 (RISQ…PESN). Lysine 331 participates in a covalent cross-link: Glycyl lysine isopeptide (Lys-Gly) (interchain with G-Cter in SUMO). An RVVP region region spans residues 366–369 (RVVP).

It belongs to the small GTPase superfamily. Arf family. As to quaternary structure, monomer. Sumoylation regulates the targeting of membrane sensory receptors to the cilium. In terms of tissue distribution, specifically expressed in ciliated sensory neurons throughout development in both hermaphrodites.

The protein localises to the cell projection. It localises to the cilium membrane. Functionally, cilium-specific protein required to control the microtubule-based, ciliary axoneme structure. Required for normal sensory cilium function. May act by maintaining the association between IFT subcomplexes A and B. This chain is ADP-ribosylation factor-like protein 13B (arl-13), found in Caenorhabditis elegans.